We begin with the raw amino-acid sequence, 101 residues long: MDPNMMIVKTLSETDCSHDNKLILPRDKVENIVRSTGVPVPRMGIQVEILDNTNSYWVNLRQSQRGYFIGRGWGELRDARNLKAGDVIKLYWQNTKFIFSM.

The TF-B3 DNA-binding region spans isoleucine 7–methionine 101.

It is found in the nucleus. This is B3 domain-containing protein At1g08985 from Arabidopsis thaliana (Mouse-ear cress).